Reading from the N-terminus, the 689-residue chain is Methionine--tRNA ligase (689 aa).

The short motif at 15–25 is the 'HIGH' region element; it reads PYANGPIHLGH. Zn(2+) is bound by residues Cys146, Cys149, Cys159, and Cys162. The 'KMSKS' region signature appears at 332-336; the sequence is KMSKS. Residue Lys335 coordinates ATP. The tRNA-binding domain maps to 588–689; sequence DFAKIDLRIA…EGAQPGMRVK (102 aa).

The protein belongs to the class-I aminoacyl-tRNA synthetase family. MetG type 1 subfamily. Homodimer. Requires Zn(2+) as cofactor.

It localises to the cytoplasm. The enzyme catalyses tRNA(Met) + L-methionine + ATP = L-methionyl-tRNA(Met) + AMP + diphosphate. Is required not only for elongation of protein synthesis but also for the initiation of all mRNA translation through initiator tRNA(fMet) aminoacylation. This Shewanella sp. (strain W3-18-1) protein is Methionine--tRNA ligase.